Here is a 1122-residue protein sequence, read N- to C-terminus: Histone deacetylase 5 (1122 aa).

The disordered stretch occupies residues 1–24; sequence MNSPNESDGMSGREPSLEILPRTS. Residue Lys-35 forms a Glycyl lysine isopeptide (Lys-Gly) (interchain with G-Cter in SUMO2) linkage. 2 disordered regions span residues 41–60 and 196–281; these read AMPS…VELR and KEPT…SSPL. Residues 247-258 are compositionally biased toward basic and acidic residues; that stretch reads DSRDDFPLRKTA. Ser-259 is subject to Phosphoserine; by AMPK, CaMK1, SIK1 and PKD/PRKD1. Residues 272–281 show a composition bias toward basic and acidic residues; that stretch reads KVAERRSSPL. Position 292 is a phosphothreonine; by PKC (Thr-292). 2 disordered regions span residues 302-343 and 481-504; these read GAGP…NIPT and MRTV…LPQS. A compositionally biased stretch (low complexity) spans 312 to 327; sequence NSAPGSGPSSPNSSHS. Over residues 328 to 340 the composition is skewed to polar residues; the sequence is TIAENGFTGSVPN. Residues 494–504 show a composition bias toward low complexity; sequence SRTQSSPLPQS. A Phosphoserine; by AMPK, CaMK1, SIK1 and PKD/PRKD1 modification is found at Ser-498. Lys-533 is modified (N6-acetyllysine). Positions 536 to 625 are disordered; sequence TKTGELPRQP…GPDLEEPGAG (90 aa). The segment covering 581 to 621 has biased composition (acidic residues); the sequence is STQEDLEEEDEEDDGEEEEDCIQVKDEEGESGAEEGPDLEE. Ser-611 and Ser-661 each carry phosphoserine. A histone deacetylase region spans residues 684–1028; that stretch reads GVVYDTFMLK…VSALLSVELQ (345 aa). Cys-696, Cys-698, His-704, and Cys-781 together coordinate Zn(2+). His-833 is an active-site residue. The Nuclear export signal signature appears at 1081–1122; that stretch reads EEAETVSAMALLSVGAEQAQAAAAREHSPRPAEEPMEQEPAL. A disordered region spans residues 1097-1122; sequence EQAQAAAAREHSPRPAEEPMEQEPAL. The segment covering 1104–1113 has biased composition (basic and acidic residues); it reads AREHSPRPAE. Ser-1108 carries the phosphoserine modification.

It belongs to the histone deacetylase family. HD type 2 subfamily. As to quaternary structure, interacts with AHRR, BAHD1, BCOR, HDAC7, HDAC9, CTBP1, MEF2C, NCOR2, NRIP1, PHB2 and a 14-3-3 chaperone protein. Interacts with BCL6, DDIT3/CHOP, GRK5, KDM5B and MYOCD. Interacts with EP300 in the presence of TFAP2C. Interacts with ANKRA2. Interacts with CUL7 (as part of the 3M complex); negatively regulated by ANKRA2. Interacts with ZBTB7B; the interaction allows the recruitment of HDAC4 on CD8 loci for deacetylation and possible inhibition of CD8 genes expression. Interacts with RARA. In terms of processing, phosphorylated by AMPK, CaMK1, SIK1 and PRKD1 at Ser-259 and Ser-498. The phosphorylation is required for the export to the cytoplasm and inhibition. Phosphorylated by the PKC kinases PKN1 and PKN2, impairing nuclear import. Phosphorylated by GRK5, leading to nuclear export of HDAC5 and allowing MEF2-mediated transcription. Ubiquitinated. Polyubiquitination however does not lead to its degradation. Ubiquitous.

Its subcellular location is the nucleus. The protein resides in the cytoplasm. The catalysed reaction is N(6)-acetyl-L-lysyl-[histone] + H2O = L-lysyl-[histone] + acetate. In terms of biological role, responsible for the deacetylation of lysine residues on the N-terminal part of the core histones (H2A, H2B, H3 and H4). Histone deacetylation gives a tag for epigenetic repression and plays an important role in transcriptional regulation, cell cycle progression and developmental events. Histone deacetylases act via the formation of large multiprotein complexes. Involved in muscle maturation by repressing transcription of myocyte enhancer MEF2C. During muscle differentiation, it shuttles into the cytoplasm, allowing the expression of myocyte enhancer factors. Involved in the MTA1-mediated epigenetic regulation of ESR1 expression in breast cancer. Serves as a corepressor of RARA and causes its deacetylation. In association with RARA, plays a role in the repression of microRNA-10a and thereby in the inflammatory response. The chain is Histone deacetylase 5 (HDAC5) from Homo sapiens (Human).